We begin with the raw amino-acid sequence, 553 residues long: Probable cytochrome P450 301a1, mitochondrial (553 aa).

Heme is bound at residue cysteine 502.

Belongs to the cytochrome P450 family. Requires heme as cofactor.

The protein localises to the mitochondrion membrane. The sequence is that of Probable cytochrome P450 301a1, mitochondrial (Cyp301a1) from Drosophila melanogaster (Fruit fly).